A 537-amino-acid polypeptide reads, in one-letter code: CTP synthase (537 aa).

Residues 1 to 269 are amidoligase domain; sequence MNQTKYIFVT…DVVALKKLDL (269 aa). CTP is bound at residue S15. S15 contacts UTP. 16-21 lines the ATP pocket; sequence SLGKGI. Y56 provides a ligand contact to L-glutamine. D73 lines the ATP pocket. 2 residues coordinate Mg(2+): D73 and E143. CTP-binding positions include 150 to 152, 190 to 195, and K226; these read DIE and KTKPTQ. Residues 190 to 195 and K226 contribute to the UTP site; that span reads KTKPTQ. Residues 295 to 537 form the Glutamine amidotransferase type-1 domain; sequence NIGLVGKYVE…VAAAVNAHKK (243 aa). G357 is an L-glutamine binding site. C384 serves as the catalytic Nucleophile; for glutamine hydrolysis. L-glutamine is bound by residues 385–388, E408, and R465; that span reads LGMQ. Active-site residues include H510 and E512.

Belongs to the CTP synthase family. In terms of assembly, homotetramer.

It carries out the reaction UTP + L-glutamine + ATP + H2O = CTP + L-glutamate + ADP + phosphate + 2 H(+). The catalysed reaction is L-glutamine + H2O = L-glutamate + NH4(+). The enzyme catalyses UTP + NH4(+) + ATP = CTP + ADP + phosphate + 2 H(+). The protein operates within pyrimidine metabolism; CTP biosynthesis via de novo pathway; CTP from UDP: step 2/2. Allosterically activated by GTP, when glutamine is the substrate; GTP has no effect on the reaction when ammonia is the substrate. The allosteric effector GTP functions by stabilizing the protein conformation that binds the tetrahedral intermediate(s) formed during glutamine hydrolysis. Inhibited by the product CTP, via allosteric rather than competitive inhibition. In terms of biological role, catalyzes the ATP-dependent amination of UTP to CTP with either L-glutamine or ammonia as the source of nitrogen. Regulates intracellular CTP levels through interactions with the four ribonucleotide triphosphates. The protein is CTP synthase of Flavobacterium johnsoniae (strain ATCC 17061 / DSM 2064 / JCM 8514 / BCRC 14874 / CCUG 350202 / NBRC 14942 / NCIMB 11054 / UW101) (Cytophaga johnsonae).